The primary structure comprises 280 residues: 3-methyl-2-oxobutanoate hydroxymethyltransferase (280 aa).

Positions 45 and 84 each coordinate Mg(2+). 3-methyl-2-oxobutanoate contacts are provided by residues 45–46 (DS), D84, and K114. E116 serves as a coordination point for Mg(2+). The Proton acceptor role is filled by E183.

Belongs to the PanB family. In terms of assembly, homodecamer; pentamer of dimers. Mg(2+) is required as a cofactor.

The protein resides in the cytoplasm. It catalyses the reaction 3-methyl-2-oxobutanoate + (6R)-5,10-methylene-5,6,7,8-tetrahydrofolate + H2O = 2-dehydropantoate + (6S)-5,6,7,8-tetrahydrofolate. The protein operates within cofactor biosynthesis; (R)-pantothenate biosynthesis; (R)-pantoate from 3-methyl-2-oxobutanoate: step 1/2. Functionally, catalyzes the reversible reaction in which hydroxymethyl group from 5,10-methylenetetrahydrofolate is transferred onto alpha-ketoisovalerate to form ketopantoate. This is 3-methyl-2-oxobutanoate hydroxymethyltransferase from Clostridium kluyveri (strain ATCC 8527 / DSM 555 / NBRC 12016 / NCIMB 10680 / K1).